The following is a 273-amino-acid chain: NADPH-dependent 7-cyano-7-deazaguanine reductase (273 aa).

81–83 (VES) provides a ligand contact to substrate. 83–84 (SK) is an NADPH binding site. The active-site Thioimide intermediate is the Cys-179. Asp-186 serves as the catalytic Proton donor. 218–219 (AE) contributes to the substrate binding site. 247–248 (RG) provides a ligand contact to NADPH.

Belongs to the GTP cyclohydrolase I family. QueF type 2 subfamily. Homodimer.

It localises to the cytoplasm. The enzyme catalyses 7-aminomethyl-7-carbaguanine + 2 NADP(+) = 7-cyano-7-deazaguanine + 2 NADPH + 3 H(+). It functions in the pathway tRNA modification; tRNA-queuosine biosynthesis. In terms of biological role, catalyzes the NADPH-dependent reduction of 7-cyano-7-deazaguanine (preQ0) to 7-aminomethyl-7-deazaguanine (preQ1). This is NADPH-dependent 7-cyano-7-deazaguanine reductase from Rickettsia canadensis (strain McKiel).